The sequence spans 81 residues: Conotoxin Vc6.7 (81 aa).

Residues 1-19 (MEKLTILLLVAAVLMSIQA) form the signal peptide. A propeptide spanning residues 20–44 (VNQEKHQRAKMNLLSKRKPPAERWW) is cleaved from the precursor. 3 disulfides stabilise this stretch: Cys-49–Cys-63, Cys-56–Cys-67, and Cys-62–Cys-72.

The protein belongs to the conotoxin O2 superfamily. As to expression, expressed by the venom duct.

It is found in the secreted. Functionally, inhibits voltage-gated ion channels. The chain is Conotoxin Vc6.7 from Conus victoriae (Queen Victoria cone).